An 862-amino-acid chain; its full sequence is Protein translocase subunit SecA (862 aa).

ATP is bound by residues Q88, 106-110, and D506; that span reads GEGKT. Residues C839, C841, C850, and H851 each coordinate Zn(2+).

Belongs to the SecA family. As to quaternary structure, monomer and homodimer. Part of the essential Sec protein translocation apparatus which comprises SecA, SecYEG and auxiliary proteins SecDF-YajC and YidC. Zn(2+) serves as cofactor.

It is found in the cell inner membrane. Its subcellular location is the cytoplasm. The enzyme catalyses ATP + H2O + cellular proteinSide 1 = ADP + phosphate + cellular proteinSide 2.. Its function is as follows. Part of the Sec protein translocase complex. Interacts with the SecYEG preprotein conducting channel. Has a central role in coupling the hydrolysis of ATP to the transfer of proteins into and across the cell membrane, serving as an ATP-driven molecular motor driving the stepwise translocation of polypeptide chains across the membrane. The protein is Protein translocase subunit SecA of Campylobacter jejuni (strain RM1221).